The primary structure comprises 555 residues: CTP synthase (555 aa).

The tract at residues 1–267 (MAKYIFVTGG…GNYLTLRLGL (267 aa)) is amidoligase domain. CTP is bound at residue Ser-13. UTP is bound at residue Ser-13. 14-19 (SVGKGI) is a binding site for ATP. Residue Tyr-54 participates in L-glutamine binding. Asp-71 is a binding site for ATP. Mg(2+)-binding residues include Asp-71 and Glu-141. CTP-binding positions include 148-150 (DIE), 188-193 (KTKPTQ), and Lys-224. Residues 188–193 (KTKPTQ) and Lys-224 contribute to the UTP site. Positions 292–535 (AIALVGKYVE…IAAAAQTFRE (244 aa)) constitute a Glutamine amidotransferase type-1 domain. Gly-354 serves as a coordination point for L-glutamine. Catalysis depends on Cys-381, which acts as the Nucleophile; for glutamine hydrolysis. L-glutamine is bound by residues 382–385 (LGMQ), Glu-406, and Arg-463. Catalysis depends on residues His-508 and Glu-510.

This sequence belongs to the CTP synthase family. As to quaternary structure, homotetramer.

The catalysed reaction is UTP + L-glutamine + ATP + H2O = CTP + L-glutamate + ADP + phosphate + 2 H(+). It catalyses the reaction L-glutamine + H2O = L-glutamate + NH4(+). It carries out the reaction UTP + NH4(+) + ATP = CTP + ADP + phosphate + 2 H(+). The protein operates within pyrimidine metabolism; CTP biosynthesis via de novo pathway; CTP from UDP: step 2/2. With respect to regulation, allosterically activated by GTP, when glutamine is the substrate; GTP has no effect on the reaction when ammonia is the substrate. The allosteric effector GTP functions by stabilizing the protein conformation that binds the tetrahedral intermediate(s) formed during glutamine hydrolysis. Inhibited by the product CTP, via allosteric rather than competitive inhibition. Its function is as follows. Catalyzes the ATP-dependent amination of UTP to CTP with either L-glutamine or ammonia as the source of nitrogen. Regulates intracellular CTP levels through interactions with the four ribonucleotide triphosphates. This is CTP synthase from Roseiflexus castenholzii (strain DSM 13941 / HLO8).